We begin with the raw amino-acid sequence, 36 residues long: Photosystem II reaction center protein Psb30 (36 aa).

A helical transmembrane segment spans residues 8–28; it reads IIAQLTVVTLTLLAGPVIVFL.

Belongs to the Psb30/Ycf12 family. PSII is composed of 1 copy each of membrane proteins PsbA, PsbB, PsbC, PsbD, PsbE, PsbF, PsbH, PsbI, PsbJ, PsbK, PsbL, PsbM, PsbT, PsbX, PsbY, PsbZ, Psb30/Ycf12, peripheral proteins of the oxygen-evolving complex and a large number of cofactors. It forms dimeric complexes.

The protein localises to the plastid. Its subcellular location is the cyanelle thylakoid membrane. In terms of biological role, a core subunit of photosystem II (PSII), probably helps stabilize the reaction center. The sequence is that of Photosystem II reaction center protein Psb30 from Cyanophora paradoxa.